Here is an 86-residue protein sequence, read N- to C-terminus: Cell division topological specificity factor (86 aa).

It belongs to the MinE family.

Prevents the cell division inhibition by proteins MinC and MinD at internal division sites while permitting inhibition at polar sites. This ensures cell division at the proper site by restricting the formation of a division septum at the midpoint of the long axis of the cell. The polypeptide is Cell division topological specificity factor (Shewanella loihica (strain ATCC BAA-1088 / PV-4)).